The sequence spans 129 residues: Prefoldin subunit 6 (129 aa).

Alanine 2 carries the N-acetylalanine modification. Lysine 21 carries the post-translational modification N6-acetyllysine. At lysine 66 the chain carries N6-acetyllysine; alternate. Lysine 66 is covalently cross-linked (Glycyl lysine isopeptide (Lys-Gly) (interchain with G-Cter in SUMO1); alternate). Lysine 66 is covalently cross-linked (Glycyl lysine isopeptide (Lys-Gly) (interchain with G-Cter in SUMO2); alternate).

This sequence belongs to the prefoldin subunit beta family. In terms of assembly, heterohexamer of two PFD-alpha type and four PFD-beta type subunits. Component of the PAQosome complex which is responsible for the biogenesis of several protein complexes and which consists of R2TP complex members RUVBL1, RUVBL2, RPAP3 and PIH1D1, URI complex members PFDN2, PFDN6, PDRG1, UXT and URI1 as well as ASDURF, POLR2E and DNAAF10/WDR92.

Functionally, binds specifically to cytosolic chaperonin (c-CPN) and transfers target proteins to it. Binds to nascent polypeptide chain and promotes folding in an environment in which there are many competing pathways for nonnative proteins. The polypeptide is Prefoldin subunit 6 (PFDN6) (Bos taurus (Bovine)).